Consider the following 377-residue polypeptide: DNA replication and repair protein RecF (377 aa).

30–37 (GNNGSGKS) contributes to the ATP binding site.

This sequence belongs to the RecF family.

Its subcellular location is the cytoplasm. Its function is as follows. The RecF protein is involved in DNA metabolism; it is required for DNA replication and normal SOS inducibility. RecF binds preferentially to single-stranded, linear DNA. It also seems to bind ATP. This is DNA replication and repair protein RecF from Colwellia psychrerythraea (strain 34H / ATCC BAA-681) (Vibrio psychroerythus).